A 66-amino-acid chain; its full sequence is uncharacterized protein (66 aa).

This is an uncharacterized protein from Methanocaldococcus jannaschii (strain ATCC 43067 / DSM 2661 / JAL-1 / JCM 10045 / NBRC 100440) (Methanococcus jannaschii).